Reading from the N-terminus, the 59-residue chain is Dimethylamine corrinoid protein (59 aa).

The B12-binding domain occupies T1 to A59.

Belongs to the methylamine corrinoid protein family.

The protein operates within one-carbon metabolism; methanogenesis from dimethylamine. Its function is as follows. Acts as a methyl group carrier between MtbB and MtbA. This is Dimethylamine corrinoid protein (mtbC) from Methanosarcina thermophila.